The sequence spans 297 residues: Acetyl-coenzyme A carboxylase carboxyl transferase subunit beta (297 aa).

The 270-residue stretch at 27–296 (LWHKCPSCEA…PEQAREAAAV (270 aa)) folds into the CoA carboxyltransferase N-terminal domain. The Zn(2+) site is built by cysteine 31, cysteine 34, cysteine 50, and cysteine 53. Residues 31–53 (CPSCEAVLYRPELEKTLDVCPKC) form a C4-type zinc finger.

The protein belongs to the AccD/PCCB family. Acetyl-CoA carboxylase is a heterohexamer composed of biotin carboxyl carrier protein (AccB), biotin carboxylase (AccC) and two subunits each of ACCase subunit alpha (AccA) and ACCase subunit beta (AccD). Zn(2+) serves as cofactor.

It localises to the cytoplasm. It carries out the reaction N(6)-carboxybiotinyl-L-lysyl-[protein] + acetyl-CoA = N(6)-biotinyl-L-lysyl-[protein] + malonyl-CoA. The protein operates within lipid metabolism; malonyl-CoA biosynthesis; malonyl-CoA from acetyl-CoA: step 1/1. In terms of biological role, component of the acetyl coenzyme A carboxylase (ACC) complex. Biotin carboxylase (BC) catalyzes the carboxylation of biotin on its carrier protein (BCCP) and then the CO(2) group is transferred by the transcarboxylase to acetyl-CoA to form malonyl-CoA. The sequence is that of Acetyl-coenzyme A carboxylase carboxyl transferase subunit beta from Pseudomonas putida (strain GB-1).